Consider the following 37-residue polypeptide: Large ribosomal subunit protein bL36 (37 aa).

This sequence belongs to the bacterial ribosomal protein bL36 family.

This chain is Large ribosomal subunit protein bL36, found in Sulfurihydrogenibium sp. (strain YO3AOP1).